The primary structure comprises 412 residues: Argininosuccinate synthase (412 aa).

8–16 (AYSGGLDTS) contributes to the ATP binding site. An L-citrulline-binding site is contributed by Y87. G117 is an ATP binding site. The L-aspartate site is built by T119, N123, and D124. N123 contacts L-citrulline. L-citrulline is bound by residues R127, S175, E259, and Y271.

The protein belongs to the argininosuccinate synthase family. Type 1 subfamily. As to quaternary structure, homotetramer.

It localises to the cytoplasm. It carries out the reaction L-citrulline + L-aspartate + ATP = 2-(N(omega)-L-arginino)succinate + AMP + diphosphate + H(+). The protein operates within amino-acid biosynthesis; L-arginine biosynthesis; L-arginine from L-ornithine and carbamoyl phosphate: step 2/3. In Clavibacter michiganensis subsp. michiganensis (strain NCPPB 382), this protein is Argininosuccinate synthase.